Reading from the N-terminus, the 613-residue chain is DBH-like monooxygenase protein 1 (613 aa).

Residues 1–19 (MCCWPLLLLWGLLPGTAAG) form the signal peptide. The Lumenal portion of the chain corresponds to 20–592 (GSGRTYPHRT…TSSSSSLHRD (573 aa)). The DOMON domain occupies 35–148 (GKYWLGWSQR…STVRVIWAYH (114 aa)). An N-linked (GlcNAc...) asparagine glycan is attached at Asn-114. The active site involves Tyr-203. Cystine bridges form between Cys-205/Cys-257 and Cys-242/Cys-269. The Cu cation site is built by His-235 and His-236. N-linked (GlcNAc...) asparagine glycosylation is present at Asn-247. Positions 307, 389, 391, and 464 each coordinate Cu cation. Disulfide bonds link Cys-364/Cys-480, Cys-368/Cys-550, and Cys-443/Cys-465. Residue His-389 is part of the active site. Residues Asn-476 and Asn-517 are each glycosylated (N-linked (GlcNAc...) asparagine). The helical transmembrane segment at 593–613 (FSINLLVCLLLLSCTLSTKSL) threads the bilayer.

This sequence belongs to the copper type II ascorbate-dependent monooxygenase family. The cofactor is Cu(2+). N-glycosylated. As to expression, highly expressed in lung, kidney, brain and spinal cord.

It is found in the endoplasmic reticulum membrane. This is DBH-like monooxygenase protein 1 (MOXD1) from Homo sapiens (Human).